A 134-amino-acid polypeptide reads, in one-letter code: D-xylulose reductase (134 aa).

Positions Pro31–Tyr115 are disordered. The span at Gln50–Val59 shows a compositional bias: basic and acidic residues.

The protein belongs to the zinc-containing alcohol dehydrogenase family.

It carries out the reaction xylitol + NAD(+) = D-xylulose + NADH + H(+). Its activity is regulated as follows. Activated by calcium and inhibited by zinc. This Sus scrofa (Pig) protein is D-xylulose reductase.